Consider the following 403-residue polypeptide: Accessory Sec system protein translocase subunit SecY2 (403 aa).

10 helical membrane-spanning segments follow: residues 17 to 37 (MLYT…SIVS), 63 to 83 (LNIF…LMLI), 105 to 125 (ILTL…YVSK), 131 to 151 (DNIY…VWLA), 157 to 177 (YGIA…MMHQ), 186 to 206 (HIVI…LLFI), 240 to 260 (ITLM…HFIL), 276 to 296 (FDSP…GYFL), 339 to 359 (WFGS…TLFV), and 366 to 386 (IYFS…AETI).

This sequence belongs to the SecY/SEC61-alpha family. SecY2 subfamily. As to quaternary structure, component of the accessory SecA2/SecY2 protein translocase complex required to export cell wall proteins. May form heterotrimers with SecE and SecG subunits.

It localises to the cell membrane. Functionally, part of the accessory SecA2/SecY2 system specifically required for export of possible cell wall proteins. The central subunit of a protein translocation channel. The sequence is that of Accessory Sec system protein translocase subunit SecY2 from Staphylococcus aureus (strain N315).